A 350-amino-acid polypeptide reads, in one-letter code: Histidinol-phosphate aminotransferase 1 (350 aa).

Lys209 carries the N6-(pyridoxal phosphate)lysine modification.

This sequence belongs to the class-II pyridoxal-phosphate-dependent aminotransferase family. Histidinol-phosphate aminotransferase subfamily. Homodimer. Pyridoxal 5'-phosphate serves as cofactor.

The catalysed reaction is L-histidinol phosphate + 2-oxoglutarate = 3-(imidazol-4-yl)-2-oxopropyl phosphate + L-glutamate. The protein operates within amino-acid biosynthesis; L-histidine biosynthesis; L-histidine from 5-phospho-alpha-D-ribose 1-diphosphate: step 7/9. The polypeptide is Histidinol-phosphate aminotransferase 1 (hisC1) (Bradyrhizobium diazoefficiens (strain JCM 10833 / BCRC 13528 / IAM 13628 / NBRC 14792 / USDA 110)).